Reading from the N-terminus, the 392-residue chain is Succinate--CoA ligase [ADP-forming] subunit beta (392 aa).

An ATP-grasp domain is found at 9–248 (KGILKQFGVA…ITEEDPLEYE (240 aa)). Residues Lys50, 57 to 59 (GRG), Glu103, Met106, and Glu111 each bind ATP. Asn203 and Asp217 together coordinate Mg(2+). Substrate is bound by residues Asn268 and 325–327 (GIV).

The protein belongs to the succinate/malate CoA ligase beta subunit family. Heterotetramer of two alpha and two beta subunits. Requires Mg(2+) as cofactor.

It carries out the reaction succinate + ATP + CoA = succinyl-CoA + ADP + phosphate. It catalyses the reaction GTP + succinate + CoA = succinyl-CoA + GDP + phosphate. The protein operates within carbohydrate metabolism; tricarboxylic acid cycle; succinate from succinyl-CoA (ligase route): step 1/1. Its function is as follows. Succinyl-CoA synthetase functions in the citric acid cycle (TCA), coupling the hydrolysis of succinyl-CoA to the synthesis of either ATP or GTP and thus represents the only step of substrate-level phosphorylation in the TCA. The beta subunit provides nucleotide specificity of the enzyme and binds the substrate succinate, while the binding sites for coenzyme A and phosphate are found in the alpha subunit. In Chlorobaculum tepidum (strain ATCC 49652 / DSM 12025 / NBRC 103806 / TLS) (Chlorobium tepidum), this protein is Succinate--CoA ligase [ADP-forming] subunit beta.